The primary structure comprises 654 residues: Transcription factor E2-alpha (654 aa).

The 9aaTAD signature appears at 19–27; sequence LLDFSMMFP. A disordered region spans residues 31-103; that stretch reads TNGKGRPASL…LGPGLGGKSG (73 aa). Low complexity predominate over residues 55 to 68; sequence SSGSWGSGDQSSSS. Over residues 69-79 the composition is skewed to polar residues; that stretch reads FDPSRTFSEGT. Residues 84 to 94 are compositionally biased toward low complexity; the sequence is SHSSLSSSTFL. S134 and S139 each carry phosphoserine. Disordered regions lie at residues 135 to 205, 239 to 268, 292 to 329, and 343 to 385; these read PGPL…SAKT, MLGG…FGGL, SFSS…GSSG, and DHSS…YDGG. Over residues 147-156 the composition is skewed to low complexity; that stretch reads SQYYPSYSGS. The Nuclear localization signal signature appears at 170–176; that stretch reads PKKVRKV. Low complexity predominate over residues 256 to 268; sequence VGSSGSSSTFGGL. Low complexity predominate over residues 343–354; it reads DHSSNNFSSSPS. T355 bears the Phosphothreonine mark. S359 carries the phosphoserine modification. Omega-N-methylarginine is present on R371. Phosphoserine is present on S379. The interval 389–425 is leucine-zipper; sequence LQSKIEDHLDEAIHVLRSHAVGTAGDMHTLLPGHGAL. Residues 461-552 form a disordered region; that stretch reads NHAALPSQPG…KAEREKERRV (92 aa). K498 participates in a covalent cross-link: Glycyl lysine isopeptide (Lys-Gly) (interchain with G-Cter in SUMO2). Positions 512 to 523 are enriched in basic and acidic residues; it reads DHSEEEKKELKA. Phosphoserine is present on S529. D531 is subject to Phosphothreonine. Residues 542-552 show a composition bias toward basic and acidic residues; that stretch reads QKAEREKERRV. The bHLH domain maps to 549–602; the sequence is ERRVANNARERLRVRDINEAFKELGRMCQLHLNSEKPQTKLLILHQAVSVILNL. A Glycyl lysine isopeptide (Lys-Gly) (interchain with G-Cter in SUMO2) cross-link involves residue K625. The tract at residues 633 to 654 is disordered; it reads PQMVLSAPHPGLSEAHNPAGHM.

As to quaternary structure, homodimer. Heterodimer; efficient DNA binding requires dimerization with another bHLH protein. Forms a heterodimer with ASH1, TWIST1 and TWIST2. Forms a heterodimer with MYOG; heterodimerization enhances MYOG DNA-binding and transcriptional activities. Forms a heterodimer with NEUROD1; the heterodimer is inhibited in presence of ID2, but not NR0B2, to E-box element. Forms a heterodimer with TCF15; the heterodimer binds E-box element. Forms a heterodimer with ATOH8; repress transcription of TCF3 and TCF3/NEUROG3 dimer-induced transactivation of E box-dependent promoters. Component of a nuclear TAL-1 complex composed at least of CBFA2T3, LDB1, TAL1 and TCF3. Interacts with NEUROD2, PTF1A and TGFB1I1. Interacts with EP300 and UBE2I. Interacts with BHLHA9. Interacts with ASB2; the interaction is mediated by SKP2 and targets TCF3 for Notch-induced proteasomal degradation. Forms a heterodimer with ATOH7; required for ATOH7 DNA-binding. In terms of assembly, interacts with RALGAPA1 and FIGLA. In terms of processing, phosphorylated following NGF stimulation. Undergoes Notch-induced ubiquitination and subsequent proteasomal degradation which is mediated by ASB1 or ASB2, the substrate-recognition components of probable ECS E3 ubiquitin-protein ligase complexes.

Its subcellular location is the nucleus. Its function is as follows. Transcriptional regulator involved in the initiation of neuronal differentiation and mesenchymal to epithelial transition. Heterodimers between TCF3 and tissue-specific basic helix-loop-helix (bHLH) proteins play major roles in determining tissue-specific cell fate during embryogenesis, like muscle or early B-cell differentiation. Together with TCF15, required for the mesenchymal to epithelial transition. Dimers bind DNA on E-box motifs: 5'-CANNTG-3'. Binds to the kappa-E2 site in the kappa immunoglobulin gene enhancer. Binds to IEB1 and IEB2, which are short DNA sequences in the insulin gene transcription control region. Functionally, facilitates ATOH7 binding to DNA at the consensus sequence 5'-CAGGTG-3', and positively regulates transcriptional activity. The sequence is that of Transcription factor E2-alpha (TCF3) from Homo sapiens (Human).